A 369-amino-acid chain; its full sequence is MIDYELKQRIDEVKKRYEDIVKVFHPEDKKKELEELEKLMGESDFWNDQKRAKEISQNAQRIRKIIDDMVDIENKLEDLEAGLELLEEDATFLDTIKQLIDDIERKVKTFELELILNEKFDSSNAYLSIHPGAGGTESQDWASMLLRMYMRWAERRGFDVQIVDYQPGEEAGIKSAMLYIKGEYVYGYLKYERGVHRLVRISPFDANKRRHTSFASVNVMPEIEDDIDVEINPEDLRIDTYRASGAGGQYVNKTESAVRITHIPTGIVVTCQTERSQLQNKETAMKVLKARLYQLELEKRQKQLEEIQGELKDISWGNQIRSYVFQPYTMVKDHRTNVETGNIDAVMDGDIDIFIESELIFFAKSKNKK.

Residue Gln-249 is modified to N5-methylglutamine.

Belongs to the prokaryotic/mitochondrial release factor family. In terms of processing, methylated by PrmC. Methylation increases the termination efficiency of RF2.

The protein localises to the cytoplasm. Its function is as follows. Peptide chain release factor 2 directs the termination of translation in response to the peptide chain termination codons UGA and UAA. This Thermosipho melanesiensis (strain DSM 12029 / CIP 104789 / BI429) protein is Peptide chain release factor 2.